We begin with the raw amino-acid sequence, 646 residues long: uncharacterized protein (646 aa).

10 consecutive transmembrane segments (helical) span residues 20-40 (AYFLSCVFAVSVFFVFTSFIF), 54-74 (LVKTCLSAALVVIIVFCIFFI), 115-135 (LAAIAAGIGAGLLFSKLFFMI), 154-174 (AFVMTIAGFLILFQTLLILSL), 203-223 (TVLSLLCLGSGYYLSATANAI), 232-252 (ILILVLIGTYFFFTQSSVAFF), 285-305 (LFLTSVITAVILTATGVIYMF), 523-543 (GVALMLFIGLFVSVLFFIVQG), 582-602 (IGFLFFIPFIAGTIHAGFAYA), and 613-633 (FLEAVIVIFIYFVFQALYYIV).

This sequence belongs to the ABC-4 integral membrane protein family.

Its subcellular location is the cell membrane. This is an uncharacterized protein from Bacillus subtilis (strain 168).